The sequence spans 758 residues: Inhibitor of nuclear factor kappa-B kinase subunit alpha (758 aa).

The region spanning 15-301 is the Protein kinase domain; it reads WVMKERLGTG…LNTDSKQPQC (287 aa). Residues 21 to 29 and Lys-44 each bind ATP; that span reads LGTGGFGHV. Asp-145 (proton acceptor) is an active-site residue. The interval 456–477 is leucine-zipper; the sequence is LLRFNTNLTRYKNMMFSFSQQL. Positions 741 to 746 are NEMO-binding; the sequence is QDWSWT.

This sequence belongs to the protein kinase superfamily. Ser/Thr protein kinase family. I-kappa-B kinase subfamily. As to quaternary structure, directly interacts with ikbkg/nemo.

The protein localises to the cytoplasm. Its subcellular location is the nucleus. The catalysed reaction is L-seryl-[I-kappa-B protein] + ATP = O-phospho-L-seryl-[I-kappa-B protein] + ADP + H(+). With respect to regulation, activated when phosphorylated and inactivated when dephosphorylated. In terms of biological role, phosphorylates inhibitors of NF-kappa-B thus leading to the dissociation of the inhibitor/NF-kappa-B complex and ultimately the degradation of the inhibitor. Phosphorylates 'Ser-10' of histone H3 at NF-kappa-B-regulated promoters during inflammatory responses triggered by cytokines. This chain is Inhibitor of nuclear factor kappa-B kinase subunit alpha (chuk), found in Danio rerio (Zebrafish).